The following is a 1238-amino-acid chain: uncharacterized protein (1238 aa).

6 disordered regions span residues Met-1–Ser-38, Ser-122–Phe-156, Pro-229–Glu-439, Lys-660–Ala-1016, Glu-1051–Ser-1083, and Lys-1098–Arg-1191. Low complexity-rich tracts occupy residues Asn-10–Asn-26, Leu-129–Leu-149, and Gln-234–Gln-276. The segment covering Glu-317 to Ser-343 has biased composition (polar residues). Over residues Gln-344–Gly-361 the composition is skewed to basic and acidic residues. Acidic residues predominate over residues Asp-362–Asn-372. Residues Thr-383–Lys-394 show a composition bias toward basic residues. The segment covering Gly-395–Ala-416 has biased composition (basic and acidic residues). Composition is skewed to low complexity over residues Thr-417–Asn-435, Gln-678–Glu-691, and Gln-712–Gln-792. Basic and acidic residues predominate over residues Gln-793–Gln-805. Low complexity-rich tracts occupy residues Ser-806–Lys-859 and Ser-882–Arg-906. The span at Glu-916–Val-927 shows a compositional bias: acidic residues. Residues Met-929–Gln-944 show a composition bias toward polar residues. Residues Glu-966 to Ala-975 show a composition bias toward basic and acidic residues. The span at Gly-976 to Gln-990 shows a compositional bias: acidic residues. Composition is skewed to low complexity over residues Gln-1062 to Ser-1083 and Ser-1108 to Asn-1121. The span at Pro-1123–Arg-1133 shows a compositional bias: polar residues. The segment covering Ser-1142–Glu-1181 has biased composition (low complexity). Over residues Asn-1182–Arg-1191 the composition is skewed to polar residues.

This is an uncharacterized protein from Dictyostelium discoideum (Social amoeba).